The chain runs to 478 residues: MTTFVDRVELHVAAGNGGHGCASVHREKFKPLGGPDGGNGGRGGDVILTVDQSVTTLLDYHHSPHRKATNGKPGEGGNRSGKDGQDLVLPVPDGTVVLDGAGNVLADLVGHGTSYVAAQGGRGGLGNAALASARRKAPGFALLGEPGDLQDIHLELKTVADVALVGYPSAGKSSLISVLSAAKPKIADYPFTTLVPNLGVVTAGETVYTVADVPGLIPGASQGKGLGLEFLRHVERCSVLVHVLDTATLESERDPLSDLDVIETELREYGGLDNRPRIVVLNKIDVPDGKDLAEMVRPDLEARGYRVFEVSAVAHMGLRELSFALAELVATARAARPKEEATRIVIRPKAVDDAGFTVTREEDGLFRVRGEKPERWVRQTDFNNDEAVGYLSDRLNRLGVEDKLMKAGARNGDGVAIGPEDNAVVFDWEPSVTAGAEMLGRRGEDHRFEAPRPAAQRRRDRDAERDEAQQEFDGFEPF.

The 158-residue stretch at 2–159 (TTFVDRVELH…QDIHLELKTV (158 aa)) folds into the Obg domain. Residues 60–88 (YHHSPHRKATNGKPGEGGNRSGKDGQDLV) are disordered. One can recognise an OBG-type G domain in the interval 160-330 (ADVALVGYPS…LSFALAELVA (171 aa)). GTP-binding positions include 166–173 (GYPSAGKS), 191–195 (FTTLV), 212–215 (DVPG), 282–285 (NKID), and 311–313 (SAV). Mg(2+) contacts are provided by Ser173 and Thr193. The 83-residue stretch at 348–430 (PKAVDDAGFT…DNAVVFDWEP (83 aa)) folds into the OCT domain. The disordered stretch occupies residues 438 to 478 (MLGRRGEDHRFEAPRPAAQRRRDRDAERDEAQQEFDGFEPF). 2 stretches are compositionally biased toward basic and acidic residues: residues 439 to 450 (LGRRGEDHRFEA) and 457 to 468 (RRRDRDAERDEA). The segment covering 469 to 478 (QQEFDGFEPF) has biased composition (acidic residues).

This sequence belongs to the TRAFAC class OBG-HflX-like GTPase superfamily. OBG GTPase family. In terms of assembly, monomer. Requires Mg(2+) as cofactor.

The protein resides in the cytoplasm. Its subcellular location is the cell membrane. Plays an unknown essential role and a regulatory role in sporulation. Overexpression suppresses sporulation although cell growth rate was not reduced. Impaired differentiation was eliminated by addition of decoyinine, an inhibitor of GMP synthesis. Overexpression has no effect on undecylprodigiosin production, but decreases actinorhodin production. Its function is as follows. An essential GTPase which binds GTP, GDP and possibly (p)ppGpp with moderate affinity, with high nucleotide exchange rates and a fairly low GTP hydrolysis rate. Plays a role in control of the cell cycle, stress response, ribosome biogenesis and in those bacteria that undergo differentiation, in morphogenesis control. This chain is GTPase Obg, found in Streptomyces coelicolor (strain ATCC BAA-471 / A3(2) / M145).